The primary structure comprises 479 residues: Endo-beta-1,6-galactanase (479 aa).

Positions 1-20 (MRSIVLPSLALALFSQRARA) are cleaved as a signal peptide. N-linked (GlcNAc...) asparagine glycosylation occurs at asparagine 89. The active-site Proton donor is the glutamate 210. A glycan (N-linked (GlcNAc...) asparagine) is linked at asparagine 271. Glutamate 311 serves as the catalytic Nucleophile. A glycan (N-linked (GlcNAc...) asparagine) is linked at asparagine 358.

It carries out the reaction Endohydrolysis of (1-&gt;6)-beta-D-galactosidic linkages in arabinogalactan proteins and (1-&gt;3):(1-&gt;6)-beta-galactans to yield galactose and beta-(1-&gt;6)-galactaobiose as the final products.. Functionally, hydrolyzes galactooligomers with a degree of polymerization higher than 3. Hydrolyzes radish root arabinogalactan-protein. Does not hydrolyze dextran, arabinan, starch, laminarin, beta-1,4- and beta-1,3-galactans, larch wood arabinogalactan or acid-insoluble polygalacturonic acid. In Hypocrea rufa (Trichoderma viride), this protein is Endo-beta-1,6-galactanase.